The sequence spans 222 residues: Probable GTP-binding protein EngB (222 aa).

An EngB-type G domain is found at 25 to 199 (AGVEVAFAGR…SQLLQNWFDT (175 aa)). Residues 33–40 (GRSNAGKS), 60–64 (GRTQH), 78–81 (DLPG), 145–148 (TKAD), and 178–180 (FSS) contribute to the GTP site. Residues Ser-40 and Thr-62 each coordinate Mg(2+).

It belongs to the TRAFAC class TrmE-Era-EngA-EngB-Septin-like GTPase superfamily. EngB GTPase family. Requires Mg(2+) as cofactor.

Functionally, necessary for normal cell division and for the maintenance of normal septation. In Nitrosomonas europaea (strain ATCC 19718 / CIP 103999 / KCTC 2705 / NBRC 14298), this protein is Probable GTP-binding protein EngB.